Here is a 303-residue protein sequence, read N- to C-terminus: Mesenteric estrogen-dependent adipogenesis protein (303 aa).

Highly expressed in the visceral fat depot.

Its subcellular location is the cytoplasm. In terms of biological role, involved in processes that promote adipocyte differentiation, lipid accumulation, and glucose uptake in mature adipocytes. The chain is Mesenteric estrogen-dependent adipogenesis protein (MEDAG) from Homo sapiens (Human).